The chain runs to 481 residues: Probable glycine dehydrogenase (decarboxylating) subunit 2 (481 aa).

A disordered region spans residues 1–23 (MVIFEKTRGKNSPSVMPSKKGDV). Residue Lys263 is modified to N6-(pyridoxal phosphate)lysine.

This sequence belongs to the GcvP family. C-terminal subunit subfamily. The glycine cleavage system is composed of four proteins: P, T, L and H. In this organism, the P 'protein' is a heterodimer of two subunits. Pyridoxal 5'-phosphate is required as a cofactor.

It carries out the reaction N(6)-[(R)-lipoyl]-L-lysyl-[glycine-cleavage complex H protein] + glycine + H(+) = N(6)-[(R)-S(8)-aminomethyldihydrolipoyl]-L-lysyl-[glycine-cleavage complex H protein] + CO2. Its function is as follows. The glycine cleavage system catalyzes the degradation of glycine. The P protein binds the alpha-amino group of glycine through its pyridoxal phosphate cofactor; CO(2) is released and the remaining methylamine moiety is then transferred to the lipoamide cofactor of the H protein. This Francisella philomiragia subsp. philomiragia (strain ATCC 25017 / CCUG 19701 / FSC 153 / O#319-036) protein is Probable glycine dehydrogenase (decarboxylating) subunit 2.